An 892-amino-acid polypeptide reads, in one-letter code: Translation initiation factor IF-2 (892 aa).

The disordered stretch occupies residues T66–A305. Polar residues predominate over residues S68–V82. Basic and acidic residues-rich tracts occupy residues V93–V159 and D166–K216. The segment covering G254–K269 has biased composition (basic residues). Residues H270 to A282 show a composition bias toward basic and acidic residues. Residues P391–K560 enclose the tr-type G domain. Residues G400 to T407 form a G1 region. A GTP-binding site is contributed by G400–T407. A G2 region spans residues G425–H429. The interval D446–G449 is G3. GTP contacts are provided by residues D446–H450 and N500–D503. The G4 stretch occupies residues N500–D503. Positions S536 to K538 are G5.

It belongs to the TRAFAC class translation factor GTPase superfamily. Classic translation factor GTPase family. IF-2 subfamily.

The protein resides in the cytoplasm. Its function is as follows. One of the essential components for the initiation of protein synthesis. Protects formylmethionyl-tRNA from spontaneous hydrolysis and promotes its binding to the 30S ribosomal subunits. Also involved in the hydrolysis of GTP during the formation of the 70S ribosomal complex. This chain is Translation initiation factor IF-2, found in Salmonella typhi.